Here is a 420-residue protein sequence, read N- to C-terminus: MFAEIISIGDELLTGQKVNTNAGFICSELAGAGIPVQRIIACADNVDAIQEQFRESLERAMLVIVTGGLGPTRDDMTKQSAQQFLNRELVVDRQTYERTLDRYKLLGKKPVSSLCENAMVIGDSVVVQNDEGLAPGMIIACEERFQGHYLVLLPGVPREMKSMMRNSVLPYFSGLCGTVIVHSHIKTTGIGEASLAKIIVEIENTLPDGTSLAYLPHTAGVSLRVSSVGTDRSSVEHDNREITDAIVSAARHFVYATSDISLEELVGSLLLKEGVTIATAESCTGGLIAGRLTDVPGSSGYFEQGFVVYSNASKEKNLGVRRETIETCGAVSEEVAAEMAEGCLQRSGVHMAVSSTGIAGPDGGTELKPAGMVCLGLAIRKEGEGVRTETETFVTRGDRLQNKLRFSEAALRMVWKALRS.

The protein belongs to the CinA family.

The protein is CinA-like protein of Chlorobium phaeobacteroides (strain BS1).